Consider the following 472-residue polypeptide: MNMPQSLGNQPLPPEPPSLGTPAEGPGTTSPPEHCWPVRPTLRNELDTFSVHFYIFFGPSVALPPERPAVFAMRLLPVLDSGGVLSLELQLNASSVRQENVTVFGCLTHEVPLSLGDAAVTCSKESLAGFLLSVSATTRVARLRIPFPQTGTWFLALRSLCGVGPRFVRCRNATAEVRMRTFLSPCVDDCGPYGQCKLLRTHNYLYAACECKAGWRGWGCTDSADALTYGFQLLSTLLLCLSNLMFLPPVVLAIRSRYVLEAAVYTFTMFFSTFYHACDQPGIVVFCIMDYDVLQFCDFLGSLMSVWVTVIAMARLQPVVKQVLYLLGAMLLSMALQLDRHGLWNLLGPSLFALGILATAWTVRSVRRRHCYPPTWRRWLFYLCPGSLIAGSAVLLYAFVETRDNYFYIHSIWHMLIAGSVGFLLPPRAKTDHGVPSGARARGCGYQLCINEQEELGLVGPGGATVSSICAS.

The disordered stretch occupies residues 1–36; sequence MNMPQSLGNQPLPPEPPSLGTPAEGPGTTSPPEHCW. Residues 1 to 233 lie on the Extracellular side of the membrane; it reads MNMPQSLGNQ…ADALTYGFQL (233 aa). 2 N-linked (GlcNAc...) asparagine glycosylation sites follow: N92 and N100. Residues 182-221 enclose the EGF-like domain; sequence FLSPCVDDCGPYGQCKLLRTHNYLYAACECKAGWRGWGCT. 3 disulfides stabilise this stretch: C186/C196, C190/C209, and C211/C220. The chain crosses the membrane as a helical span at residues 234–254; it reads LSTLLLCLSNLMFLPPVVLAI. At 255 to 257 the chain is on the cytoplasmic side; the sequence is RSR. The chain crosses the membrane as a helical span at residues 258–277; that stretch reads YVLEAAVYTFTMFFSTFYHA. At 278-292 the chain is on the extracellular side; that stretch reads CDQPGIVVFCIMDYD. A helical transmembrane segment spans residues 293–313; that stretch reads VLQFCDFLGSLMSVWVTVIAM. Over 314 to 315 the chain is Cytoplasmic; it reads AR. A helical transmembrane segment spans residues 316–336; it reads LQPVVKQVLYLLGAMLLSMAL. Topologically, residues 337-342 are extracellular; the sequence is QLDRHG. A helical membrane pass occupies residues 343–363; it reads LWNLLGPSLFALGILATAWTV. The Cytoplasmic segment spans residues 364-379; sequence RSVRRRHCYPPTWRRW. A helical transmembrane segment spans residues 380–400; it reads LFYLCPGSLIAGSAVLLYAFV. Topologically, residues 401-405 are extracellular; that stretch reads ETRDN. A helical membrane pass occupies residues 406–426; it reads YFYIHSIWHMLIAGSVGFLLP. At 427–472 the chain is on the cytoplasmic side; it reads PRAKTDHGVPSGARARGCGYQLCINEQEELGLVGPGGATVSSICAS.

The protein belongs to the TMEM8 family. In terms of assembly, isoform 2 (via its cytoplasmic part) interacts with EZR. Post-translationally, isoform 2 is N-glycosylated.

The protein localises to the cell membrane. It is found in the cytoplasm. Its subcellular location is the nucleus. It localises to the mitochondrion. The protein resides in the endoplasmic reticulum. In terms of biological role, may function as a regulator of the EGFR pathway. Probable tumor suppressor which may function in cell growth, proliferation and adhesion. The polypeptide is Transmembrane protein 8B (TMEM8B) (Homo sapiens (Human)).